The chain runs to 125 residues: Probable 4-amino-4-deoxy-L-arabinose-phosphoundecaprenol flippase subunit ArnF (125 aa).

The Cytoplasmic segment spans residues 1 to 2; that stretch reads MG. A helical membrane pass occupies residues 3–23; that stretch reads VMWGLISVAIASLAQLSLGFA. Residues 24–33 are Periplasmic-facing; the sequence is MMRLPSIAHP. A helical membrane pass occupies residues 34–54; sequence LAFISGLGAFNAATLALFAGL. The Cytoplasmic segment spans residues 55 to 76; it reads AGYLVSVFCWQKTLHMLALSKA. A helical membrane pass occupies residues 77–97; that stretch reads YALLSLSYVLVWVASMLLPGL. The Periplasmic segment spans residues 98-100; that stretch reads QGA. A helical membrane pass occupies residues 101–121; the sequence is FSLKAMLGVLCIMAGVMLIFL. The Cytoplasmic portion of the chain corresponds to 122–125; that stretch reads PARS.

The protein belongs to the ArnF family. As to quaternary structure, heterodimer of ArnE and ArnF.

It localises to the cell inner membrane. Its pathway is bacterial outer membrane biogenesis; lipopolysaccharide biosynthesis. In terms of biological role, translocates 4-amino-4-deoxy-L-arabinose-phosphoundecaprenol (alpha-L-Ara4N-phosphoundecaprenol) from the cytoplasmic to the periplasmic side of the inner membrane. The polypeptide is Probable 4-amino-4-deoxy-L-arabinose-phosphoundecaprenol flippase subunit ArnF (Salmonella paratyphi A (strain ATCC 9150 / SARB42)).